We begin with the raw amino-acid sequence, 760 residues long: MNWRFVELLYFLFVWGRISVQPSRQEPAGTDQHVSKEFDWLISDRGPFHHSRSYLSFVERHRQGFTTRYKIYREFARWKVRNTAIERRDLVRHPVPLMPEFQRSIRLLGRRPTTQQFIDTIIKKYGTHLLISATLGGEEALTMYMDKSRLDRKSGNATQSVEALHQLASSYFVDRDGTMRRLHEIQISTGAIKVTETRTGPLGCNSYDNLDSVSSVLLQSTESKLHLQGLQIIFPQYLQEKFVQSALSYIMCNGEGEYVCQNSQCRCQCAEEFPQCNCPITDIQIMEFTLANMAKAWTEAYKDLENSDEFKSFMKRLPSNHFLTIGSIHQHWGNDWDLQSRYKLLQSATEAQRQKIQRTARKLFGLSVRCRHNPNHQLPRERTIQQWLARVQSLLYCNENGFWGTFLESQRSCVCHGSTTLCQRPIPCIIGGNNSCAMCSLANISLCGSCNKGYKLYRGRCEPQNVDSERSEQFISFETDLDFQDLELKYLLQKMDSRLYVHTTFISNEIRLDTFFDPRWRKRMSLTLKSNKNRMDFIHMVIGMSMRICQMRNSSLDPMFFVYVNPFSGSHSEGWNMPFGEFGYPRWEKIRLQNSQCYNWTLLLGNRWKTFFETVHIYLRSRTRLPTLRNETGQGPVDLSDPSKRQFYIKISDVQVFGYSLRFNADLLRSAVQQVNQSYTQGGQFYSSSSVMLLMLDIRDRINRLAPPVAPGKPQLDLFSCMLKHRLKLTNSEIIRVNHALDLYNTEILKQSDQMTAKLC.

The N-terminal stretch at 1–16 is a signal peptide; the sequence is MNWRFVELLYFLFVWG. Residues 68-251 enclose the MACPF domain; the sequence is RYKIYREFAR…FVQSALSYIM (184 aa). Asn-156, Asn-433, Asn-443, Asn-553, Asn-599, Asn-630, and Asn-676 each carry an N-linked (GlcNAc...) asparagine glycan.

The protein belongs to the BRINP family. Expressed in brain. Expressed in GABAergic neurons of the pre-frontal cortex. Weakly expressed in embryonic stem (ES) cells and in ES-derived neural stem cells (NSCs).

It is found in the cytoplasm. Plays a role in neurogenesis, brain development, and the functioning of GABAergic neurons. May suppress cell cycle progression in postmitotic neurons by inhibiting G1/S transition. The sequence is that of BMP/retinoic acid-inducible neural-specific protein 1 (Brinp1) from Mus musculus (Mouse).